The primary structure comprises 272 residues: Putative pyruvate, phosphate dikinase regulatory protein (272 aa).

Residue 154-161 (GVSRTSKS) coordinates ADP.

It belongs to the pyruvate, phosphate/water dikinase regulatory protein family. PDRP subfamily.

It carries out the reaction N(tele)-phospho-L-histidyl/L-threonyl-[pyruvate, phosphate dikinase] + ADP = N(tele)-phospho-L-histidyl/O-phospho-L-threonyl-[pyruvate, phosphate dikinase] + AMP + H(+). The catalysed reaction is N(tele)-phospho-L-histidyl/O-phospho-L-threonyl-[pyruvate, phosphate dikinase] + phosphate + H(+) = N(tele)-phospho-L-histidyl/L-threonyl-[pyruvate, phosphate dikinase] + diphosphate. Bifunctional serine/threonine kinase and phosphorylase involved in the regulation of the pyruvate, phosphate dikinase (PPDK) by catalyzing its phosphorylation/dephosphorylation. This is Putative pyruvate, phosphate dikinase regulatory protein from Wolbachia sp. subsp. Brugia malayi (strain TRS).